Reading from the N-terminus, the 166-residue chain is NAD(P)H-quinone oxidoreductase subunit I, chloroplastic (166 aa).

2 consecutive 4Fe-4S ferredoxin-type domains span residues 55–84 and 95–124; these read GRIHFEFDKCIACEVCVRVCPIDLPVVDWK and LNYSIDFGICIFCGNCVEYCPTNCLSMTEE. Residues cysteine 64, cysteine 67, cysteine 70, cysteine 74, cysteine 104, cysteine 107, cysteine 110, and cysteine 114 each contribute to the [4Fe-4S] cluster site.

It belongs to the complex I 23 kDa subunit family. In terms of assembly, NDH is composed of at least 16 different subunits, 5 of which are encoded in the nucleus. [4Fe-4S] cluster is required as a cofactor.

It localises to the plastid. It is found in the chloroplast thylakoid membrane. The enzyme catalyses a plastoquinone + NADH + (n+1) H(+)(in) = a plastoquinol + NAD(+) + n H(+)(out). The catalysed reaction is a plastoquinone + NADPH + (n+1) H(+)(in) = a plastoquinol + NADP(+) + n H(+)(out). NDH shuttles electrons from NAD(P)H:plastoquinone, via FMN and iron-sulfur (Fe-S) centers, to quinones in the photosynthetic chain and possibly in a chloroplast respiratory chain. The immediate electron acceptor for the enzyme in this species is believed to be plastoquinone. Couples the redox reaction to proton translocation, and thus conserves the redox energy in a proton gradient. The sequence is that of NAD(P)H-quinone oxidoreductase subunit I, chloroplastic from Chamaechaenactis scaposa (Fullstem).